We begin with the raw amino-acid sequence, 845 residues long: uncharacterized protein (845 aa).

Disordered regions lie at residues 17–37 (RRKQ…NDQP) and 550–573 (AATE…NESL). A coiled-coil region spans residues 622-707 (LSEQRFEREN…ELKKSNEHTR (86 aa)).

This is an uncharacterized protein from Saccharum officinarum (Sugarcane).